The chain runs to 122 residues: Large ribosomal subunit protein bL12 (122 aa).

This sequence belongs to the bacterial ribosomal protein bL12 family. As to quaternary structure, homodimer. Part of the ribosomal stalk of the 50S ribosomal subunit. Forms a multimeric L10(L12)X complex, where L10 forms an elongated spine to which 2 to 4 L12 dimers bind in a sequential fashion. Binds GTP-bound translation factors.

Forms part of the ribosomal stalk which helps the ribosome interact with GTP-bound translation factors. Is thus essential for accurate translation. The chain is Large ribosomal subunit protein bL12 from Lacticaseibacillus casei (strain BL23) (Lactobacillus casei).